Consider the following 297-residue polypeptide: Glutamyl-Q tRNA(Asp) synthetase (297 aa).

L-glutamate-binding positions include Arg-9–Ser-13 and Glu-45. A 'HIGH' region motif is present at residues Pro-12–Ser-22. Residues Cys-101, Cys-103, and Cys-118 each coordinate Zn(2+). L-glutamate is bound by residues Tyr-170 and Arg-188. The short motif at Lys-226 to Ser-230 is the 'KMSKS' region element. Lys-229 is a binding site for ATP.

The protein belongs to the class-I aminoacyl-tRNA synthetase family. GluQ subfamily. The cofactor is Zn(2+).

Functionally, catalyzes the tRNA-independent activation of glutamate in presence of ATP and the subsequent transfer of glutamate onto a tRNA(Asp). Glutamate is transferred on the 2-amino-5-(4,5-dihydroxy-2-cyclopenten-1-yl) moiety of the queuosine in the wobble position of the QUC anticodon. This Xanthomonas campestris pv. campestris (strain 8004) protein is Glutamyl-Q tRNA(Asp) synthetase.